A 601-amino-acid chain; its full sequence is Glutathione-regulated potassium-efflux system protein KefB (601 aa).

The next 13 helical transmembrane spans lie at 4-24 (ADLLTAGVLFLFAAVAAVPLA), 29-49 (IGAVLGYLLAGIAIGPWGLGF), 55-75 (EILHFSELGVVFLMFIIGLEL), 87-107 (IFGVGAAQVLLSAAVLAGLLM), 111-131 (FLWQAAVVGGIGLAMSSTAMA), 152-172 (VLLFQDLAVIPALALVPLLAG), 177-197 (HFDWFKVAMKVLAFAVMLIGG), 207-227 (FIAASGVREVFTAATLLLVLS), 230-250 (LFMDALGLSMALGTFIAGVLL), 262-282 (AIDPFKGLLLGLFFISVGMSL), 284-304 (LGVLYTHLLWVAASVVILVVI), 324-344 (MQFASVLSQGGEFAFVLFSTA), and 356-376 (ALLLVTVTLSMMTTPLLMKGI). The RCK N-terminal domain occupies 400–519 (KPQVIVVGFG…AGVTQFSRET (120 aa)).

Belongs to the monovalent cation:proton antiporter 2 (CPA2) transporter (TC 2.A.37) family. KefB subfamily. In terms of assembly, interacts with the regulatory subunit KefG.

The protein resides in the cell inner membrane. In terms of biological role, pore-forming subunit of a potassium efflux system that confers protection against electrophiles. Catalyzes K(+)/H(+) antiport. This is Glutathione-regulated potassium-efflux system protein KefB from Salmonella heidelberg (strain SL476).